Reading from the N-terminus, the 563-residue chain is Arginine--tRNA ligase (563 aa).

Positions Pro121 to His131 match the 'HIGH' region motif.

The protein belongs to the class-I aminoacyl-tRNA synthetase family. In terms of assembly, monomer.

It localises to the cytoplasm. The catalysed reaction is tRNA(Arg) + L-arginine + ATP = L-arginyl-tRNA(Arg) + AMP + diphosphate. The protein is Arginine--tRNA ligase of Streptococcus mutans serotype c (strain ATCC 700610 / UA159).